A 228-amino-acid chain; its full sequence is UPF0134 protein MPN_137 (228 aa).

This sequence belongs to the UPF0134 family.

The protein is UPF0134 protein MPN_137 of Mycoplasma pneumoniae (strain ATCC 29342 / M129 / Subtype 1) (Mycoplasmoides pneumoniae).